Consider the following 467-residue polypeptide: MSKGTLFDKVWDLHTVRILPSGQTQLFIGLHLIHEVTSPQAFAMLRERNLKVLFPDRTVATVDHIVPTENQARPFIDDLAEEMMRAIETNAKDNNIRFYNIGSGNQGIVHVIAPEQGLTQPGMTIACGDSHTSTHGAFGAIAFGIGTSQVRDVLATQTLALSKLKVRKIEVNGKLSPGVYAKDVILHIIRKLGVKGGVGYAYEYAGTTFESMSMEERMTVCNMSIEGGARCGYINPDGVTFEYLKGRDFSPQGEDWDKAVDWWKSIRSDEDAQYDDVVVFEAADIEPTVTWGITPGQGIGVSEAVPTPESLAESDRYIAKEAYEYMKLIPGSPIKGTKIDVCFIGSCTNGRISDLREAAKFAQGRQVATGVKAFVVPGSERVKQQAEAEGLDKIFVEAGFEWREAGCSMCLAMNPDKLQGDQISASSSNRNFKGRQGSSTGRTLLMSPAMVVAAAVNGKVADVREFI.

[4Fe-4S] cluster-binding residues include cysteine 347, cysteine 407, and cysteine 410.

It belongs to the aconitase/IPM isomerase family. LeuC type 1 subfamily. Heterodimer of LeuC and LeuD. The cofactor is [4Fe-4S] cluster.

The catalysed reaction is (2R,3S)-3-isopropylmalate = (2S)-2-isopropylmalate. It functions in the pathway amino-acid biosynthesis; L-leucine biosynthesis; L-leucine from 3-methyl-2-oxobutanoate: step 2/4. In terms of biological role, catalyzes the isomerization between 2-isopropylmalate and 3-isopropylmalate, via the formation of 2-isopropylmaleate. The polypeptide is 3-isopropylmalate dehydratase large subunit (Gloeothece citriformis (strain PCC 7424) (Cyanothece sp. (strain PCC 7424))).